Consider the following 722-residue polypeptide: MAEYLRLPHSLAMIRLCNPPVNAVSPTVIREVRNGLQKAGSDHTVKAIVICGANGNFCAGADIHGFSAFTPGLALGSLVDEIQRYQKPVLAAIQGVALGGGLELALGCHYRIANAKARVGLPEVTLGILPGARGTQLLPRVVGVPVALDLITSGKYLSADEALRLGILDAVVKSDPVEEAIKFAQKIIDKPIEPRRIFNKPVPSLPNMDSVFAEAIAKVRKQYPGVLAPETCVRSIQASVKHPYEVGIKEEEKLFMYLRASGQAKALQYAFFAEKSANKWSTPSGASWKTASAQPVSSVGVLGLGTMGRGIAISFARVGISVVAVESDPKQLDAAKKIITFTLEKEASRAHQNGQASAKPKLRFSSSTKELSTVDLVVEAVFEDMNLKKKVFAELSALCKPGAFLCTNTSALNVDDIASSTDRPQLVIGTHFFSPAHVMRLLEVIPSRYSSPTTIATVMSLSKKIGKIGVVVGNCYGFVGNRMLAPYYNQGFFLLEEGSKPEDVDGVLEEFGFKMGPFRVSDLAGLDVGWKIRKGQGLTGPSLPPGTPVRKRGNSRYSPLGDMLCEAGRFGQKTGKGWYQYDKPLGRIHKPDPWLSTFLSQYREVHHIEQRTISKEEILERCLYSLINEAFRILEEGMAARPEHIDVIYLHGYGWPRHKGGPMFYAASVGLPTVLEKLQKYYRQNPDIPQLEPSDYLRRLVAQGSPPLKEWQSLAGPHGSKL.

Residues 1–281 (MAEYLRLPHS…FAEKSANKWS (281 aa)) form an enoyl-CoA hydratase / isomerase region. Residue A2 is modified to Blocked amino end (Ala). Residue K38 is modified to N6-succinyllysine. A substrate-binding site is contributed by G100. Residue K173 is modified to N6-acetyllysine; alternate. N6-succinyllysine; alternate is present on K173. An N6-succinyllysine modification is found at K182. N6-acetyllysine; alternate is present on residues K190 and K218. 2 positions are modified to N6-succinyllysine; alternate: K190 and K218. Residue K241 is modified to N6-succinyllysine. K249 is subject to N6-acetyllysine. K253 carries the N6-succinyllysine modification. K275 carries the post-translational modification N6-acetyllysine; alternate. N6-succinyllysine; alternate is present on K275. N6-succinyllysine is present on residues K279, K289, and K330. Residues 282–571 (TPSGASWKTA…DMLCEAGRFG (290 aa)) form a 3-hydroxyacyl-CoA dehydrogenase region. Residues K345, K359, and K463 each carry the N6-acetyllysine modification. K531 bears the N6-succinyllysine mark. T547 bears the Phosphothreonine mark. An N6-succinyllysine modification is found at K576. N6-acetyllysine; alternate is present on residues K583, K590, and K709. 3 positions are modified to N6-succinyllysine; alternate: K583, K590, and K709. Positions 720 to 722 (SKL) match the Microbody targeting signal motif. An N6-succinyllysine modification is found at K721.

In the N-terminal section; belongs to the enoyl-CoA hydratase/isomerase family. It in the C-terminal section; belongs to the 3-hydroxyacyl-CoA dehydrogenase family. Monomer. Post-translationally, acetylated, leading to enhanced enzyme activity. Acetylation is enhanced by up to 80% after treatment either with trichostin A (TCA) or with nicotinamide (NAM) with highest increase on Lys-345. Acetylation and enzyme activity increased by about 1.5% on addition of fatty acids.

It localises to the peroxisome. The enzyme catalyses a (3S)-3-hydroxyacyl-CoA = a (2E)-enoyl-CoA + H2O. It carries out the reaction a 4-saturated-(3S)-3-hydroxyacyl-CoA = a (3E)-enoyl-CoA + H2O. The catalysed reaction is a (3Z)-enoyl-CoA = a 4-saturated (2E)-enoyl-CoA. It catalyses the reaction a (3E)-enoyl-CoA = a 4-saturated (2E)-enoyl-CoA. The enzyme catalyses a (3S)-3-hydroxyacyl-CoA + NAD(+) = a 3-oxoacyl-CoA + NADH + H(+). It carries out the reaction (2S,3S)-3-hydroxy-2-methylbutanoyl-CoA = (2E)-2-methylbut-2-enoyl-CoA + H2O. The catalysed reaction is (3E,5Z)-tetradecadienoyl-CoA = (2E,5Z)-tetradecadienoyl-CoA. It catalyses the reaction (3E,5Z)-octadienoyl-CoA = (2E,5Z)-octadienoyl-CoA. The enzyme catalyses (3S)-hydroxydecanoyl-CoA + NAD(+) = 3-oxodecanoyl-CoA + NADH + H(+). It carries out the reaction (3E)-decenoyl-CoA = (2E)-decenoyl-CoA. The catalysed reaction is (3Z)-hexenoyl-CoA = (2E)-hexenoyl-CoA. It catalyses the reaction (3E)-hexenoyl-CoA = (2E)-hexenoyl-CoA. The enzyme catalyses (3S)-hydroxydecanoyl-CoA = (2E)-decenoyl-CoA + H2O. It carries out the reaction (3S)-hydroxyhexanoyl-CoA = (2E)-hexenoyl-CoA + H2O. The catalysed reaction is (3S)-hydroxyhexadecanoyl-CoA + NAD(+) = 3-oxohexadecanoyl-CoA + NADH + H(+). It catalyses the reaction (3S)-hydroxyhexadecanoyl-CoA = (2E)-hexadecenoyl-CoA + H2O. The enzyme catalyses (2E)-hexadecenedioyl-CoA + H2O = (3S)-hydroxyhexadecanedioyl-CoA. It carries out the reaction (3S)-hydroxyhexadecanedioyl-CoA + NAD(+) = 3-oxohexadecanedioyl-CoA + NADH + H(+). The protein operates within lipid metabolism; fatty acid beta-oxidation. With respect to regulation, enzyme activity enhanced by acetylation. Peroxisomal trifunctional enzyme possessing 2-enoyl-CoA hydratase, 3-hydroxyacyl-CoA dehydrogenase, and delta 3, delta 2-enoyl-CoA isomerase activities. Catalyzes two of the four reactions of the long chain fatty acids peroxisomal beta-oxidation pathway. Can also use branched-chain fatty acids such as 2-methyl-2E-butenoyl-CoA as a substrate, which is hydrated into (2S,3S)-3-hydroxy-2-methylbutanoyl-CoA. Optimal isomerase for 2,5 double bonds into 3,5 form isomerization in a range of enoyl-CoA species. Also able to isomerize both 3-cis and 3-trans double bonds into the 2-trans form in a range of enoyl-CoA species. Regulates the amount of medium-chain dicarboxylic fatty acids which are essential regulators of all fatty acid oxidation pathways. Also involved in the degradation of long-chain dicarboxylic acids through peroxisomal beta-oxidation. This chain is Peroxisomal bifunctional enzyme, found in Rattus norvegicus (Rat).